We begin with the raw amino-acid sequence, 336 residues long: MTEISEICETAFKLTYHPIYRGSLFIHLFVSISSIIPLIYFVIFKLPKTSFHGNLKFLFSAYFVSVFLFSVDFAIISTTEILIPLFSKHPCNLLIPDQYLKIGNTTVSIFMSLSTFFPISITIERFIAMKMARTYEKTRVRLGPILTGCNILLDLLIVFFIYRDEKFDDGSISFVFFPKTLAPKMFTFFWVMFFLNLINFTFNSYLLRQSIRLKVSTSSLATKYQREEVVHSTKFAVFVVFCHVILFGFYVIGIMILRYFGSIFIPDPADLMATRGAFTTMISLYNLVVGSVAVYLNHLIKTRKSEEITGTVRIQATGAVGAQNYENAIFNIWNSV.

A run of 7 helical transmembrane segments spans residues 24–44, 57–77, 109–129, 142–162, 186–206, 237–257, and 276–296; these read LFIHLFVSISSIIPLIYFVIF, FLFSAYFVSVFLFSVDFAIIS, IFMSLSTFFPISITIERFIAM, LGPILTGCNILLDLLIVFFIY, FTFFWVMFFLNLINFTFNSYL, VFVVFCHVILFGFYVIGIMIL, and GAFTTMISLYNLVVGSVAVYL.

Belongs to the nematode receptor-like protein srb family.

Its subcellular location is the membrane. The chain is Serpentine receptor class beta-15 (srb-15) from Caenorhabditis elegans.